A 116-amino-acid polypeptide reads, in one-letter code: NADH-quinone oxidoreductase subunit A (116 aa).

3 helical membrane passes run 3–23 (FTFL…VIAL), 61–81 (FAIL…WAVV), and 88–108 (QGLV…AYAW).

Belongs to the complex I subunit 3 family. In terms of assembly, NDH-1 is composed of 14 different subunits. Subunits NuoA, H, J, K, L, M, N constitute the membrane sector of the complex.

Its subcellular location is the cell inner membrane. The catalysed reaction is a quinone + NADH + 5 H(+)(in) = a quinol + NAD(+) + 4 H(+)(out). Its function is as follows. NDH-1 shuttles electrons from NADH, via FMN and iron-sulfur (Fe-S) centers, to quinones in the respiratory chain. The immediate electron acceptor for the enzyme in this species is believed to be a menaquinone. Couples the redox reaction to proton translocation (for every two electrons transferred, four hydrogen ions are translocated across the cytoplasmic membrane), and thus conserves the redox energy in a proton gradient. This chain is NADH-quinone oxidoreductase subunit A, found in Bacteroides thetaiotaomicron (strain ATCC 29148 / DSM 2079 / JCM 5827 / CCUG 10774 / NCTC 10582 / VPI-5482 / E50).